We begin with the raw amino-acid sequence, 220 residues long: Probable nicotinate-nucleotide adenylyltransferase (220 aa).

This sequence belongs to the NadD family.

It catalyses the reaction nicotinate beta-D-ribonucleotide + ATP + H(+) = deamido-NAD(+) + diphosphate. It participates in cofactor biosynthesis; NAD(+) biosynthesis; deamido-NAD(+) from nicotinate D-ribonucleotide: step 1/1. Functionally, catalyzes the reversible adenylation of nicotinate mononucleotide (NaMN) to nicotinic acid adenine dinucleotide (NaAD). This chain is Probable nicotinate-nucleotide adenylyltransferase, found in Laribacter hongkongensis (strain HLHK9).